The sequence spans 80 residues: RNA-binding protein KhpA (80 aa).

A KH domain is found at 33–80 (GRTVEVHVHPDDLGKVIGRGGRTATALRTLVAGIGGRGIRVDVVDTDQ).

Belongs to the KhpA RNA-binding protein family.

The protein localises to the cytoplasm. Its function is as follows. A probable RNA-binding protein. The protein is RNA-binding protein KhpA of Mycobacterium bovis (strain ATCC BAA-935 / AF2122/97).